Here is a 214-residue protein sequence, read N- to C-terminus: Imidazole glycerol phosphate synthase subunit HisH (214 aa).

In terms of domain architecture, Glutamine amidotransferase type-1 spans 3 to 211 (IIAVIDYDMG…VEQVQATLAT (209 aa)). Cys-81 serves as the catalytic Nucleophile. Catalysis depends on residues His-186 and Glu-188.

In terms of assembly, heterodimer of HisH and HisF.

Its subcellular location is the cytoplasm. The enzyme catalyses 5-[(5-phospho-1-deoxy-D-ribulos-1-ylimino)methylamino]-1-(5-phospho-beta-D-ribosyl)imidazole-4-carboxamide + L-glutamine = D-erythro-1-(imidazol-4-yl)glycerol 3-phosphate + 5-amino-1-(5-phospho-beta-D-ribosyl)imidazole-4-carboxamide + L-glutamate + H(+). It catalyses the reaction L-glutamine + H2O = L-glutamate + NH4(+). It participates in amino-acid biosynthesis; L-histidine biosynthesis; L-histidine from 5-phospho-alpha-D-ribose 1-diphosphate: step 5/9. Its function is as follows. IGPS catalyzes the conversion of PRFAR and glutamine to IGP, AICAR and glutamate. The HisH subunit catalyzes the hydrolysis of glutamine to glutamate and ammonia as part of the synthesis of IGP and AICAR. The resulting ammonia molecule is channeled to the active site of HisF. In Acaryochloris marina (strain MBIC 11017), this protein is Imidazole glycerol phosphate synthase subunit HisH.